We begin with the raw amino-acid sequence, 425 residues long: UPF0761 membrane protein PXO_04555 (425 aa).

6 helical membrane-spanning segments follow: residues Val48–Phe68, Phe105–Glu125, Gly154–Phe174, Leu182–Ile202, Gly219–Gly239, and Ala250–Leu270.

The protein belongs to the UPF0761 family.

It localises to the cell inner membrane. The sequence is that of UPF0761 membrane protein PXO_04555 from Xanthomonas oryzae pv. oryzae (strain PXO99A).